Consider the following 1486-residue polypeptide: Chromosome partition protein MukB (1486 aa).

34-41 lines the ATP pocket; the sequence is GGNGAGKS. 3 coiled-coil regions span residues 326 to 418, 444 to 480, and 509 to 603; these read LEAD…QYNQ, LETFQAKELEATEKMLSLEQKMSMAQTAHSQFEQAYQ, and RHLA…RAPV. Residues 666–783 are flexible hinge; the sequence is PGGSEDQRLN…EVPLFGRAAR (118 aa). 3 coiled-coil regions span residues 835-923, 977-1115, and 1209-1266; these read EAEI…AKLE, EMLS…TAKA, and VEAI…QNVS.

Belongs to the SMC family. MukB subfamily. As to quaternary structure, homodimerization via its hinge domain. Binds to DNA via its C-terminal region. Interacts, and probably forms a ternary complex, with MukE and MukF via its C-terminal region. The complex formation is stimulated by calcium or magnesium. Interacts with tubulin-related protein FtsZ.

It is found in the cytoplasm. It localises to the nucleoid. In terms of biological role, plays a central role in chromosome condensation, segregation and cell cycle progression. Functions as a homodimer, which is essential for chromosome partition. Involved in negative DNA supercoiling in vivo, and by this means organize and compact chromosomes. May achieve or facilitate chromosome segregation by condensation DNA from both sides of a centrally located replisome during cell division. This Escherichia coli (strain SMS-3-5 / SECEC) protein is Chromosome partition protein MukB.